A 210-amino-acid chain; its full sequence is MKKYSGLLGIISAPSGAGKSTLINALQKNDSILQIKLSISYTTRKKRPGEVHGKDYYFISIEEFQNMINQNMFLEYAKVFNHYYGTEKNSIKLMLNSGVHVILNIDWQGMNQIRNKKLDFYTIFILPPSQKELEKRLRFRGLDTDQVIFDRMKQAMNEISHCKEYDYIIINDDFNIALIYLQSVILSKQLKIDYQEYHNSNLINNLLSCL.

A Guanylate kinase-like domain is found at 6-186 (GLLGIISAPS…ALIYLQSVIL (181 aa)). 13 to 20 (APSGAGKS) contributes to the ATP binding site.

The protein belongs to the guanylate kinase family.

Its subcellular location is the cytoplasm. The catalysed reaction is GMP + ATP = GDP + ADP. Its function is as follows. Essential for recycling GMP and indirectly, cGMP. In Blochmanniella floridana, this protein is Guanylate kinase.